The primary structure comprises 250 residues: 5'-nucleotidase SurE (250 aa).

A divalent metal cation is bound by residues Asp-9, Asp-10, Ser-40, and Asn-92.

Belongs to the SurE nucleotidase family. A divalent metal cation is required as a cofactor.

It localises to the cytoplasm. The enzyme catalyses a ribonucleoside 5'-phosphate + H2O = a ribonucleoside + phosphate. Nucleotidase that shows phosphatase activity on nucleoside 5'-monophosphates. The polypeptide is 5'-nucleotidase SurE (Idiomarina loihiensis (strain ATCC BAA-735 / DSM 15497 / L2-TR)).